The sequence spans 424 residues: Glutamate-1-semialdehyde 2,1-aminomutase (424 aa).

An N6-(pyridoxal phosphate)lysine modification is found at K263.

This sequence belongs to the class-III pyridoxal-phosphate-dependent aminotransferase family. HemL subfamily. As to quaternary structure, homodimer. Pyridoxal 5'-phosphate serves as cofactor.

It is found in the cytoplasm. It carries out the reaction (S)-4-amino-5-oxopentanoate = 5-aminolevulinate. The protein operates within porphyrin-containing compound metabolism; protoporphyrin-IX biosynthesis; 5-aminolevulinate from L-glutamyl-tRNA(Glu): step 2/2. This Campylobacter jejuni subsp. doylei (strain ATCC BAA-1458 / RM4099 / 269.97) protein is Glutamate-1-semialdehyde 2,1-aminomutase.